The primary structure comprises 305 residues: 2-oxoacid:ferredoxin oxidoreductase subunit beta (305 aa).

Positions 12, 15, and 46 each coordinate [4Fe-4S] cluster. Thiamine diphosphate-binding positions include 44-47 (IGCS) and His65. A Mg(2+)-binding site is contributed by Asp90. Position 91–92 (91–92 (GD)) interacts with thiamine diphosphate. Residues Asn118 and Val120 each contribute to the Mg(2+) site. Residue 122-123 (GL) participates in thiamine diphosphate binding. Cys197 is a binding site for [4Fe-4S] cluster.

Heterodimer composed of an alpha and a beta subunit. [4Fe-4S] cluster serves as cofactor. It depends on thiamine diphosphate as a cofactor. Requires Mg(2+) as cofactor.

The protein localises to the cytoplasm. The enzyme catalyses a 2-oxocarboxylate + 2 oxidized [2Fe-2S]-[ferredoxin] + CoA = an acyl-CoA + 2 reduced [2Fe-2S]-[ferredoxin] + CO2 + H(+). In terms of biological role, catalyzes the coenzyme A-dependent oxidative decarboxylation of different 2-oxoacids such as 2-oxoglutarate, pyruvate and 2-oxobutyrate to form their CoA derivatives. The chain is 2-oxoacid:ferredoxin oxidoreductase subunit beta from Sulfolobus sp.